The chain runs to 302 residues: MPHPSLKSNRALPLLTFARTHSFAIPAICVYNLEGILAIIRAAEHKRSPAMILLFPWAIQYADSLLVRTAASACRAASVPITLHLDHAQDPEIIKRAADLSRSETHEPGFDSIMVDMSHFSKEENLRLTRELVAYCNARGIATEAEPGRIEGGEDGVQDTVDLEGVLTTPEESEEFVATGINWLAPAFGNVHGNYGPRGVQLDYERLQRINEAVGERVGLVLHGADPFTKEIFEKCIERGVAKVNVNRAVNNEYVKVMREKAGSLPITRLHEEVTNAMQAAVEKIMDMIDSTGKAEFMMDEK.

The active-site Proton donor is the D86. Zn(2+) is bound by residues H87, D116, E146, and H192. A dihydroxyacetone phosphate-binding site is contributed by G193. A Zn(2+)-binding site is contributed by H223. Residues 224-226 (GAD) and 245-248 (NVNR) each bind dihydroxyacetone phosphate.

It belongs to the class II fructose-bisphosphate aldolase family. As to quaternary structure, homodimer. Requires Zn(2+) as cofactor.

It carries out the reaction beta-D-fructose 1,6-bisphosphate = D-glyceraldehyde 3-phosphate + dihydroxyacetone phosphate. It functions in the pathway carbohydrate degradation; glycolysis; D-glyceraldehyde 3-phosphate and glycerone phosphate from D-glucose: step 4/4. Functionally, catalyzes the aldol condensation of dihydroxyacetone phosphate (DHAP or glycerone-phosphate) with glyceraldehyde 3-phosphate (G3P) to form fructose 1,6-bisphosphate (FBP) in gluconeogenesis and the reverse reaction in glycolysis. This is Putative fructose-bisphosphate aldolase from Coccidioides immitis (strain RS) (Valley fever fungus).